The sequence spans 555 residues: Galectin-3-binding protein (555 aa).

The first 18 residues, 1 to 18 (MAPLRLFWIWLLVVGTRG), serve as a signal peptide directing secretion. In terms of domain architecture, SRCR spans 24-124 (MRLADGGSAN…HDKDASVICT (101 aa)). 3 disulfides stabilise this stretch: Cys-49/Cys-113, Cys-62/Cys-123, and Cys-93/Cys-103. A glycan (N-linked (GlcNAc...) asparagine) is linked at Asn-69. A glycan (N-linked (GlcNAc...) asparagine) is linked at Asn-125. The BTB domain occupies 153–221 (CDLFITVKVR…LYSRRIDVSL (69 aa)). The BACK domain maps to 260-360 (PLELYAYALA…MPPQDLFSLQ (101 aa)). Residues Asn-362, Asn-398, and Asn-550 are each glycosylated (N-linked (GlcNAc...) asparagine).

Homodimers and homomultimers. The multimers form ring-like structures with a diameter of 30-40 nm. Binds LGALS1 and LGALS3. Binds ITGB1, COL4A1, COL5A1, COL6A1, FN1 and NID. Interacts with the gamma-tubulin ring complex (gamma-TuRC), composed of gamma-tubulin, TUBGCP2, TUBGCP3, TUBGCP4, TUBGCP5 and TUBGCP6. The unglycosylated form interacts with PDE4DIP; this interaction, which is PDE4DIP isoform-specific, may connect a pericentrosomal complex, made of AKAP9, CDK5RAP2, EB1/MAPRE1 and PDE4DIP, to the gamma-tubulin ring complex (gamma-TuRC) to promote microtubule assembly and acetylation.

It localises to the secreted. Its subcellular location is the extracellular space. It is found in the extracellular matrix. In terms of biological role, promotes integrin-mediated cell adhesion. May stimulate host defense against viruses and tumor cells. The chain is Galectin-3-binding protein (LGALS3BP) from Bos taurus (Bovine).